Reading from the N-terminus, the 407-residue chain is Pyridinium-3,5-bisthiocarboxylic acid mononucleotide nickel insertion protein (407 aa).

The protein belongs to the LarC family.

It catalyses the reaction Ni(II)-pyridinium-3,5-bisthiocarboxylate mononucleotide = pyridinium-3,5-bisthiocarboxylate mononucleotide + Ni(2+). Involved in the biosynthesis of a nickel-pincer cofactor ((SCS)Ni(II) pincer complex). Binds Ni(2+), and functions in nickel delivery to pyridinium-3,5-bisthiocarboxylic acid mononucleotide (P2TMN), to form the mature cofactor. Is thus probably required for the activation of nickel-pincer cofactor-dependent enzymes. The sequence is that of Pyridinium-3,5-bisthiocarboxylic acid mononucleotide nickel insertion protein from Acetivibrio thermocellus (strain ATCC 27405 / DSM 1237 / JCM 9322 / NBRC 103400 / NCIMB 10682 / NRRL B-4536 / VPI 7372) (Clostridium thermocellum).